Here is a 212-residue protein sequence, read N- to C-terminus: Interleukin-6 (212 aa).

The N-terminal stretch at 1–27 (MNSFSTSAFGPVAFSLGLLLVLPAAFP) is a signal peptide. A disulfide bridge links Cys-72 with Cys-78. The N-linked (GlcNAc...) asparagine glycan is linked to Asn-73. The residue at position 81 (Ser-81) is a Phosphoserine. Cysteines 101 and 111 form a disulfide. An N-linked (GlcNAc...) asparagine glycan is attached at Asn-172.

The protein belongs to the IL-6 superfamily. In terms of assembly, component of a hexamer of two molecules each of IL6, IL6R and IL6ST; first binds to IL6R to associate with the signaling subunit IL6ST. Interacts with IL6R (via the N-terminal ectodomain); this interaction may be affected by IL6R-binding with SORL1, hence decreasing IL6 cis signaling. Interacts with SORL1 (via the N-terminal ectodomain); this interaction leads to IL6 internalization and lysosomal degradation. May form a trimeric complex with the soluble SORL1 ectodomain and soluble IL6R receptor; this interaction might stabilize circulating IL6, hence promoting IL6 trans signaling.

The protein localises to the secreted. In terms of biological role, cytokine with a wide variety of biological functions in immunity, tissue regeneration, and metabolism. Binds to IL6R, then the complex associates to the signaling subunit IL6ST/gp130 to trigger the intracellular IL6-signaling pathway. The interaction with the membrane-bound IL6R and IL6ST stimulates 'classic signaling', whereas the binding of IL6 and soluble IL6R to IL6ST stimulates 'trans-signaling'. Alternatively, 'cluster signaling' occurs when membrane-bound IL6:IL6R complexes on transmitter cells activate IL6ST receptors on neighboring receiver cells. Functionally, IL6 is a potent inducer of the acute phase response. Rapid production of IL6 contributes to host defense during infection and tissue injury, but excessive IL6 synthesis is involved in disease pathology. In the innate immune response, is synthesized by myeloid cells, such as macrophages and dendritic cells, upon recognition of pathogens through toll-like receptors (TLRs) at the site of infection or tissue injury. In the adaptive immune response, is required for the differentiation of B cells into immunoglobulin-secreting cells. Plays a major role in the differentiation of CD4(+) T cell subsets. Essential factor for the development of T follicular helper (Tfh) cells that are required for the induction of germinal-center formation. Required to drive naive CD4(+) T cells to the Th17 lineage. Also required for proliferation of myeloma cells and the survival of plasmablast cells. Acts as an essential factor in bone homeostasis and on vessels directly or indirectly by induction of VEGF, resulting in increased angiogenesis activity and vascular permeability. Induces, through 'trans-signaling' and synergistically with IL1B and TNF, the production of VEGF. Involved in metabolic controls, is discharged into the bloodstream after muscle contraction increasing lipolysis and improving insulin resistance. 'Trans-signaling' in central nervous system also regulates energy and glucose homeostasis. Mediates, through GLP-1, crosstalk between insulin-sensitive tissues, intestinal L cells and pancreatic islets to adapt to changes in insulin demand. Also acts as a myokine. Plays a protective role during liver injury, being required for maintenance of tissue regeneration. Also has a pivotal role in iron metabolism by regulating HAMP/hepcidin expression upon inflammation or bacterial infection. Through activation of IL6ST-YAP-NOTCH pathway, induces inflammation-induced epithelial regeneration. The sequence is that of Interleukin-6 (IL6) from Macaca mulatta (Rhesus macaque).